The sequence spans 169 residues: Cytochrome c oxidase subunit 4 isoform 1, mitochondrial (169 aa).

A mitochondrion-targeting transit peptide spans 1–22; sequence MLASRALSLIGKRAISTSVCLR. Topologically, residues 23–99 are mitochondrial matrix; it reads AHGSVVKSED…FAEMNRGTNE (77 aa). At Lys29 the chain carries N6-acetyllysine; alternate. Lys29 is subject to N6-succinyllysine; alternate. A phosphoserine mark is found at Ser56 and Ser58. N6-acetyllysine; alternate is present on Lys60. Position 60 is an N6-succinyllysine; alternate (Lys60). Position 67 is an N6-acetyllysine (Lys67). Residues 100 to 125 form a helical membrane-spanning segment; that stretch reads WKTVVGMAMFFIGFTALVLIWEKSYV. The Mitochondrial intermembrane portion of the chain corresponds to 126–169; the sequence is YGPIPHTFDRDWVAMQTKRMLDMKANPIQGFSAKWDYDKNEWKK.

The protein belongs to the cytochrome c oxidase IV family. Component of the cytochrome c oxidase (complex IV, CIV), a multisubunit enzyme composed of 14 subunits. The complex is composed of a catalytic core of 3 subunits MT-CO1, MT-CO2 and MT-CO3, encoded in the mitochondrial DNA, and 11 supernumerary subunits COX4I, COX5A, COX5B, COX6A, COX6B, COX6C, COX7A, COX7B, COX7C, COX8 and NDUFA4, which are encoded in the nuclear genome. The complex exists as a monomer or a dimer and forms supercomplexes (SCs) in the inner mitochondrial membrane with NADH-ubiquinone oxidoreductase (complex I, CI) and ubiquinol-cytochrome c oxidoreductase (cytochrome b-c1 complex, complex III, CIII), resulting in different assemblies (supercomplex SCI(1)III(2)IV(1) and megacomplex MCI(2)III(2)IV(2)). Interacts with PHB2; the interaction decreases in absence of SPHK2. Interacts with AFG1L. Interacts with ABCB7; this interaction allows the regulation of cellular iron homeostasis and cellular reactive oxygen species (ROS) levels in cardiomyocytes. Interacts with FLVCR2; this interaction occurs in the absence of heme and is disrupted upon heme binding. Interacts with IRGC.

It is found in the mitochondrion inner membrane. Its pathway is energy metabolism; oxidative phosphorylation. Component of the cytochrome c oxidase, the last enzyme in the mitochondrial electron transport chain which drives oxidative phosphorylation. The respiratory chain contains 3 multisubunit complexes succinate dehydrogenase (complex II, CII), ubiquinol-cytochrome c oxidoreductase (cytochrome b-c1 complex, complex III, CIII) and cytochrome c oxidase (complex IV, CIV), that cooperate to transfer electrons derived from NADH and succinate to molecular oxygen, creating an electrochemical gradient over the inner membrane that drives transmembrane transport and the ATP synthase. Cytochrome c oxidase is the component of the respiratory chain that catalyzes the reduction of oxygen to water. Electrons originating from reduced cytochrome c in the intermembrane space (IMS) are transferred via the dinuclear copper A center (CU(A)) of subunit 2 and heme A of subunit 1 to the active site in subunit 1, a binuclear center (BNC) formed by heme A3 and copper B (CU(B)). The BNC reduces molecular oxygen to 2 water molecules using 4 electrons from cytochrome c in the IMS and 4 protons from the mitochondrial matrix. This is Cytochrome c oxidase subunit 4 isoform 1, mitochondrial (Cox4i1) from Mus musculus (Mouse).